Here is a 616-residue protein sequence, read N- to C-terminus: Dihydroxy-acid dehydratase (616 aa).

Position 81 (aspartate 81) interacts with Mg(2+). Residue cysteine 122 coordinates [2Fe-2S] cluster. Aspartate 123 and lysine 124 together coordinate Mg(2+). The residue at position 124 (lysine 124) is an N6-carboxylysine. Residue cysteine 195 coordinates [2Fe-2S] cluster. Glutamate 491 provides a ligand contact to Mg(2+). Serine 517 serves as the catalytic Proton acceptor.

This sequence belongs to the IlvD/Edd family. Homodimer. [2Fe-2S] cluster serves as cofactor. Mg(2+) is required as a cofactor.

The enzyme catalyses (2R)-2,3-dihydroxy-3-methylbutanoate = 3-methyl-2-oxobutanoate + H2O. The catalysed reaction is (2R,3R)-2,3-dihydroxy-3-methylpentanoate = (S)-3-methyl-2-oxopentanoate + H2O. It participates in amino-acid biosynthesis; L-isoleucine biosynthesis; L-isoleucine from 2-oxobutanoate: step 3/4. Its pathway is amino-acid biosynthesis; L-valine biosynthesis; L-valine from pyruvate: step 3/4. Functions in the biosynthesis of branched-chain amino acids. Catalyzes the dehydration of (2R,3R)-2,3-dihydroxy-3-methylpentanoate (2,3-dihydroxy-3-methylvalerate) into 2-oxo-3-methylpentanoate (2-oxo-3-methylvalerate) and of (2R)-2,3-dihydroxy-3-methylbutanoate (2,3-dihydroxyisovalerate) into 2-oxo-3-methylbutanoate (2-oxoisovalerate), the penultimate precursor to L-isoleucine and L-valine, respectively. The polypeptide is Dihydroxy-acid dehydratase (Salmonella gallinarum (strain 287/91 / NCTC 13346)).